We begin with the raw amino-acid sequence, 471 residues long: Eukaryotic translation initiation factor 3 subunit L (471 aa).

A PCI domain is found at Asp-252–Leu-446.

This sequence belongs to the eIF-3 subunit L family.

It is found in the cytoplasm. In terms of biological role, component of the eukaryotic translation initiation factor 3 (eIF-3) complex, which is involved in protein synthesis of a specialized repertoire of mRNAs and, together with other initiation factors, stimulates binding of mRNA and methionyl-tRNAi to the 40S ribosome. The eIF-3 complex specifically targets and initiates translation of a subset of mRNAs involved in cell proliferation. This Pyricularia oryzae (strain Y34) (Rice blast fungus) protein is Eukaryotic translation initiation factor 3 subunit L.